Consider the following 188-residue polypeptide: Achaete-scute homolog 5 (188 aa).

The interval 80–93 is basic motif; that stretch reads AFIQKRNERERQRV. The bHLH domain occupies 80 to 132; sequence AFIQKRNERERQRVKCVNEGYARLRGHLPGALTEKRLSKVETLRAAIRYIKYL. The interval 94 to 132 is helix-loop-helix motif; it reads KCVNEGYARLRGHLPGALTEKRLSKVETLRAAIRYIKYL. The interval 139–188 is disordered; sequence TPDGAPPPATSPPPAHTGHSNVPQPSSLVAESSGSPFSSSPFLESEEPSL. The span at 142 to 153 shows a compositional bias: pro residues; it reads GAPPPATSPPPA. Polar residues predominate over residues 158-168; the sequence is SNVPQPSSLVA. Positions 169 to 181 are enriched in low complexity; the sequence is ESSGSPFSSSPFL.

As to quaternary structure, interacts with transcription factor TCF3/E12. In terms of tissue distribution, expressed in teeth (at protein level).

The protein localises to the nucleus. Its function is as follows. Transcription factor. Probably binds E-box motifs 5'-CANNTG-3' in complex with transcription factor TCF3/E12. Negatively modulates transcription of target genes such as CDH1/E-cadherin, perhaps by recruiting the PRC2 repressive complex to regulatory elements. Regulates ameloblast development and tooth germ growth, perhaps acting by positively modulating migration of inner enamel epithelium (IEE) cells. Plays a role in enamel formation. This Mus musculus (Mouse) protein is Achaete-scute homolog 5.